Reading from the N-terminus, the 1346-residue chain is G-protein coupled receptor-associated sorting protein 1 (1346 aa).

3 disordered regions span residues 1 to 101 (MTGA…FRGE), 144 to 177 (TESIPKKASSPARFQPSFGPEEGTSMGSWYRPRP), and 192 to 258 (ADKS…SAKT). A compositionally biased stretch (low complexity) spans 21 to 36 (ENANAAEVEPEVPLVV). Over residues 211–226 (FRPRKSMKSNTRFRHM) the composition is skewed to basic residues. Ser295 is subject to Phosphoserine. Disordered stretches follow at residues 311–399 (EEAK…RPEE) and 461–485 (VSSFCLGSGKKTSMESGPKATSKSM). The span at 316-333 (RSKPRARKGVNMRARHQA) shows a compositional bias: basic residues. Composition is skewed to basic and acidic residues over residues 347–361 (DKNKKDSWFLPEEKA) and 370–399 (KKEPRTRAMPREEVKTKARASTKQEARPEE). The segment covering 461–484 (VSSFCLGSGKKTSMESGPKATSKS) has biased composition (polar residues). Phosphoserine is present on residues Ser619 and Ser626. Thr860 bears the Phosphothreonine mark. Ser862 bears the Phosphoserine mark. Positions 984–1004 (ACEPESSTEHEPDPSRRPQSW) are disordered. Positions 990–1003 (STEHEPDPSRRPQS) are enriched in basic and acidic residues.

The protein belongs to the GPRASP family. As to quaternary structure, interacts with cytoplasmic tails of a variety of G-protein coupled receptors such as delta opioid receptor/OPRD1, beta-2 adrenergic receptor/ADRB2 and D4 dopamine receptor/DRD4. Interacts with BECN2; the interaction is direct and with D2 dopamine receptor/DRD2. Interacts with PER1. In terms of tissue distribution, expressed in the brain.

It localises to the cytoplasm. In terms of biological role, modulates lysosomal sorting and functional down-regulation of a variety of G-protein coupled receptors. Targets receptors for degradation in lysosomes via its interaction with BECN2. The chain is G-protein coupled receptor-associated sorting protein 1 (Gprasp1) from Rattus norvegicus (Rat).